A 273-amino-acid polypeptide reads, in one-letter code: Ethanolamine ammonia-lyase small subunit (273 aa).

Residues Val164, Glu185, and Cys214 each contribute to the adenosylcob(III)alamin site.

This sequence belongs to the EutC family. The basic unit is a heterodimer which dimerizes to form tetramers. The heterotetramers trimerize; 6 large subunits form a core ring with 6 small subunits projecting outwards. Adenosylcob(III)alamin is required as a cofactor.

The protein resides in the bacterial microcompartment. It carries out the reaction ethanolamine = acetaldehyde + NH4(+). The protein operates within amine and polyamine degradation; ethanolamine degradation. In terms of biological role, catalyzes the deamination of various vicinal amino-alcohols to oxo compounds. Allows this organism to utilize ethanolamine as the sole source of nitrogen and carbon in the presence of external vitamin B12. This chain is Ethanolamine ammonia-lyase small subunit, found in Pseudomonas paraeruginosa (strain DSM 24068 / PA7) (Pseudomonas aeruginosa (strain PA7)).